Consider the following 130-residue polypeptide: S-adenosylmethionine decarboxylase proenzyme (130 aa).

The active-site Schiff-base intermediate with substrate; via pyruvic acid is the S63. A Pyruvic acid (Ser); by autocatalysis modification is found at S63. The Proton acceptor; for processing activity role is filled by H68. C83 functions as the Proton donor; for catalytic activity in the catalytic mechanism.

This sequence belongs to the prokaryotic AdoMetDC family. Type 1 subfamily. Heterotetramer of two alpha and two beta chains arranged as a dimer of alpha/beta heterodimers. It depends on pyruvate as a cofactor. In terms of processing, is synthesized initially as an inactive proenzyme. Formation of the active enzyme involves a self-maturation process in which the active site pyruvoyl group is generated from an internal serine residue via an autocatalytic post-translational modification. Two non-identical subunits are generated from the proenzyme in this reaction, and the pyruvate is formed at the N-terminus of the alpha chain, which is derived from the carboxyl end of the proenzyme. The post-translation cleavage follows an unusual pathway, termed non-hydrolytic serinolysis, in which the side chain hydroxyl group of the serine supplies its oxygen atom to form the C-terminus of the beta chain, while the remainder of the serine residue undergoes an oxidative deamination to produce ammonia and the pyruvoyl group blocking the N-terminus of the alpha chain.

The enzyme catalyses S-adenosyl-L-methionine + H(+) = S-adenosyl 3-(methylsulfanyl)propylamine + CO2. Its pathway is amine and polyamine biosynthesis; S-adenosylmethioninamine biosynthesis; S-adenosylmethioninamine from S-adenosyl-L-methionine: step 1/1. Catalyzes the decarboxylation of S-adenosylmethionine to S-adenosylmethioninamine (dcAdoMet), the propylamine donor required for the synthesis of the polyamines spermine and spermidine from the diamine putrescine. The polypeptide is S-adenosylmethionine decarboxylase proenzyme (Thermosipho melanesiensis (strain DSM 12029 / CIP 104789 / BI429)).